A 681-amino-acid chain; its full sequence is RNA polymerase sigma factor RpoD (681 aa).

Disordered stretches follow at residues 1–60 (MKKK…ETAK) and 239–270 (DDDE…VSEK). The segment covering 261–270 (EERKKVVSEK) has biased composition (basic and acidic residues). A sigma-70 factor domain-2 region spans residues 446-516 (MAKSNLRLVV…SRAIADQART (71 aa)). The short motif at 470–473 (DLIQ) is the Interaction with polymerase core subunit RpoC element. Residues 525–601 (DTINRINKVM…DKNIVSSIDH (77 aa)) form a sigma-70 factor domain-3 region. The sigma-70 factor domain-4 stretch occupies residues 614–668 (VLDQLNEREKAVIRMRFGLLDDESDRTLEEIGKELNVTRERVRQIESSAIKKLRS). Residues 641–660 (LEEIGKELNVTRERVRQIES) constitute a DNA-binding region (H-T-H motif).

The protein belongs to the sigma-70 factor family. RpoD/SigA subfamily. Interacts transiently with the RNA polymerase catalytic core.

The protein resides in the cytoplasm. In terms of biological role, sigma factors are initiation factors that promote the attachment of RNA polymerase to specific initiation sites and are then released. This sigma factor is the primary sigma factor during exponential growth. The protein is RNA polymerase sigma factor RpoD of Helicobacter pylori (strain J99 / ATCC 700824) (Campylobacter pylori J99).